We begin with the raw amino-acid sequence, 571 residues long: MKQSKILISTVKEVPNDAEVLSHKMMLRAGYIRQISAGMYAYLPLAYKVISKIEKIVREEMEAIDAVEMLTPAVLPAELWKQSGRYETYGQELYKFKNRHDRDFILGPTHEETMTTLIRDEVKSYKKLPLSLYQIQMKYRDEDRPRYGLLRGREFLMKDAYSFHADEETLDQSFRDFEKAYQNIFRRCGLNFREIVGDAGAMGGRDSKEFSAIASIGEDTIAYSEESDYAANLEMASSVYTDLQMHENQEELTKVATDDAHSIDEVAAKLDVDSNRLIKTMVLIVDEAPVLALLRGNDQLNEVKLTNLLHADEVREATEEEAFELLGAHVGSLGPVLENKPENLKIVADKYIEQMVNSVVGANEDGFHLKNVNVERDFTVDEYADIRTVREGELAPDGKGALKFTKGIEIGHIFKIGTKYSEALDAKVLDENGRAIPVIMGCYGIGVSRLLSAVSEQQSDENGLVWPKNIAPYDVHVIPVNAKNAEQMEIADQINGELTKAGYDVLVDDRKERAGVKFADSDLIGIPLRVTIGKKASEGIVEVKLRKTGEAVEVKVAELNNTVEILLNQAQ.

This sequence belongs to the class-II aminoacyl-tRNA synthetase family. ProS type 1 subfamily. Homodimer.

It is found in the cytoplasm. The enzyme catalyses tRNA(Pro) + L-proline + ATP = L-prolyl-tRNA(Pro) + AMP + diphosphate. Its function is as follows. Catalyzes the attachment of proline to tRNA(Pro) in a two-step reaction: proline is first activated by ATP to form Pro-AMP and then transferred to the acceptor end of tRNA(Pro). As ProRS can inadvertently accommodate and process non-cognate amino acids such as alanine and cysteine, to avoid such errors it has two additional distinct editing activities against alanine. One activity is designated as 'pretransfer' editing and involves the tRNA(Pro)-independent hydrolysis of activated Ala-AMP. The other activity is designated 'posttransfer' editing and involves deacylation of mischarged Ala-tRNA(Pro). The misacylated Cys-tRNA(Pro) is not edited by ProRS. The protein is Proline--tRNA ligase of Pediococcus pentosaceus (strain ATCC 25745 / CCUG 21536 / LMG 10740 / 183-1w).